A 249-amino-acid chain; its full sequence is Methylthioribulose-1-phosphate dehydratase (249 aa).

Cys102 contacts substrate. Residues His120 and His122 each coordinate Zn(2+). Glu148 (proton donor/acceptor) is an active-site residue. His205 is a Zn(2+) binding site.

It belongs to the aldolase class II family. MtnB subfamily. It depends on Zn(2+) as a cofactor.

The protein localises to the cytoplasm. It carries out the reaction 5-(methylsulfanyl)-D-ribulose 1-phosphate = 5-methylsulfanyl-2,3-dioxopentyl phosphate + H2O. The protein operates within amino-acid biosynthesis; L-methionine biosynthesis via salvage pathway; L-methionine from S-methyl-5-thio-alpha-D-ribose 1-phosphate: step 2/6. In terms of biological role, catalyzes the dehydration of methylthioribulose-1-phosphate (MTRu-1-P) into 2,3-diketo-5-methylthiopentyl-1-phosphate (DK-MTP-1-P). The sequence is that of Methylthioribulose-1-phosphate dehydratase from Botryotinia fuckeliana (strain B05.10) (Noble rot fungus).